A 374-amino-acid polypeptide reads, in one-letter code: Protein FAM199X (374 aa).

A disordered region spans residues 238–343 (YIREHSPRQR…QLKEQRQARK (106 aa)). Over residues 261 to 295 (SNGSTSGVSAHSSSNASMVSSTSSSTASTGSNSST) the composition is skewed to low complexity. Over residues 315 to 334 (DSKKRSKQRKMQQKALRKRQ) the composition is skewed to basic residues. Residues 317 to 346 (KKRSKQRKMQQKALRKRQLKEQRQARKERL) adopt a coiled-coil conformation.

This sequence belongs to the FAM199 family.

This Danio rerio (Zebrafish) protein is Protein FAM199X (fam199x).